Here is a 44-residue protein sequence, read N- to C-terminus: 2S seed storage albumin protein (44 aa).

Cystine bridges form between cysteine 7–cysteine 42 and cysteine 19–cysteine 31.

Belongs to the 2S seed storage albumins family. The mature protein consists of a small and a large chain linked by 2 disulfide bonds.

In terms of biological role, this is a 2S seed storage protein. Has antifungal activity. Inhibits spore germination in H.sativum (IC(50)=62.5 ug/ml) and P.betae (IC(50)=62.5 ug/ml). Inhibits growth of H.sativum, V.albo-atrum and P.infestans. In Taraxacum officinale (Common dandelion), this protein is 2S seed storage albumin protein.